The following is a 237-amino-acid chain: GCN5-related N-acetyltransferase 3, chloroplastic (237 aa).

The transit peptide at 1-93 (MGLVGCVGKS…RAISRSDVIV (93 aa)) directs the protein to the chloroplast. Positions 94–237 (SVFCKPQHVD…TMMFTKSLEA (144 aa)) constitute an N-acetyltransferase domain. Acetyl-CoA is bound by residues 171–173 (LMV), 179–184 (RMGIGK), 207–209 (FED), and phenylalanine 214.

It belongs to the acetyltransferase family. GNAT subfamily. Oligomer. Autoacetylated. Expressed in green tissues.

The protein resides in the plastid. It is found in the chloroplast. The catalysed reaction is an N-terminal L-alpha-aminoacyl-[protein] + acetyl-CoA = N-terminal N(alpha)-acetyl-L-alpha-aminoacyl-[protein] + CoA + H(+). The enzyme catalyses L-lysyl-[protein] + acetyl-CoA = N(6)-acetyl-L-lysyl-[protein] + CoA + H(+). In terms of biological role, protein acetyltransferase with dual specificity triggering both N-alpha-acetylation (NTA) and epsilon-lysine acetylation (KA), possibly with a low efficiency or toward specific plastid substrates. The polypeptide is GCN5-related N-acetyltransferase 3, chloroplastic (Arabidopsis thaliana (Mouse-ear cress)).